Consider the following 547-residue polypeptide: Chaperonin GroEL (547 aa).

Residues 30 to 33, K51, 87 to 91, G415, and D496 contribute to the ATP site; these read TLGP and DGTTT.

It belongs to the chaperonin (HSP60) family. In terms of assembly, forms a cylinder of 14 subunits composed of two heptameric rings stacked back-to-back. Interacts with the co-chaperonin GroES.

It is found in the cytoplasm. It catalyses the reaction ATP + H2O + a folded polypeptide = ADP + phosphate + an unfolded polypeptide.. Its function is as follows. Together with its co-chaperonin GroES, plays an essential role in assisting protein folding. The GroEL-GroES system forms a nano-cage that allows encapsulation of the non-native substrate proteins and provides a physical environment optimized to promote and accelerate protein folding. This chain is Chaperonin GroEL, found in Histophilus somni (strain 129Pt) (Haemophilus somnus).